The following is a 177-amino-acid chain: Ubiquinol-cytochrome c reductase iron-sulfur subunit (177 aa).

A helical transmembrane segment spans residues 18-38; it reads MVLTASSVAAIGAVCTLWPLV. One can recognise a Rieske domain in the interval 88 to 175; sequence ARAVKMSELI…YTFISDKKIR (88 aa). The [2Fe-2S] cluster site is built by Cys-120, His-122, Cys-139, and His-142. Cysteines 125 and 141 form a disulfide.

It belongs to the Rieske iron-sulfur protein family. As to quaternary structure, the main subunits of complex b-c1 are: cytochrome b, cytochrome c1 and the Rieske protein. Requires [2Fe-2S] cluster as cofactor.

Its subcellular location is the cell membrane. The catalysed reaction is a quinol + 2 Fe(III)-[cytochrome c](out) = a quinone + 2 Fe(II)-[cytochrome c](out) + 2 H(+)(out). Functionally, component of the ubiquinol-cytochrome c reductase complex (complex III or cytochrome b-c1 complex), which is a respiratory chain that generates an electrochemical potential coupled to ATP synthesis. This chain is Ubiquinol-cytochrome c reductase iron-sulfur subunit (petA), found in Rickettsia conorii (strain ATCC VR-613 / Malish 7).